Consider the following 346-residue polypeptide: Peripherin-2 (346 aa).

The Cytoplasmic portion of the chain corresponds to 1–24 (MALLKVKFDQKKRVKLAQGLWLMN). The chain crosses the membrane as a helical span at residues 25 to 43 (WLSVLAGIVIFSLGLFLKI). Over 44–61 (ELRKRSDVMNNSESHFVP) the chain is Lumenal. An N-linked (GlcNAc...) asparagine glycan is attached at Asn-53. Residues 62–80 (NSLIGMGVLSCVFNSLAGK) traverse the membrane as a helical segment. Over 81 to 99 (ICYDALDPSKYAKWKPWLK) the chain is Cytoplasmic. The chain crosses the membrane as a helical span at residues 100-123 (SYLVVCVLFNIVLFLVALCCFLMR). The Lumenal segment spans residues 124–264 (GSLESTLAQG…LSYYGSLMNS (141 aa)). N-linked (GlcNAc...) asparagine glycosylation occurs at Asn-229. Residues 265-290 (MGAVTLLVWLFEVSITIGLRYLHTAL) traverse the membrane as a helical segment. The Cytoplasmic portion of the chain corresponds to 291–346 (EGVSNPEDLECESEGWLLEKSVSETWKAFLESLKKLGKSNQVEAEGADAGQAPEAG). Residues 341–346 (QAPEAG) form an interaction with MREG region.

This sequence belongs to the PRPH2/ROM1 family. As to quaternary structure, homodimer; disulfide-linked. Forms a homotetramer. Forms a heterotetramer with ROM1. Homotetramer and heterotetramer core complexes go on to form higher order complexes by formation of intermolecular disulfide bonds. Interacts with MREG. Interacts with STX3. Interacts with SNAP25. In terms of tissue distribution, retina (photoreceptor). In rim region of ROS (rod outer segment) disks.

The protein resides in the membrane. It localises to the cell projection. The protein localises to the cilium. Its subcellular location is the photoreceptor outer segment. It is found in the photoreceptor inner segment. Its function is as follows. Essential for retina photoreceptor outer segment disk morphogenesis, may also play a role with ROM1 in the maintenance of outer segment disk structure. Required for the maintenance of retinal outer nuclear layer thickness. Required for the correct development and organization of the photoreceptor inner segment. This Felis catus (Cat) protein is Peripherin-2 (PRPH2).